The primary structure comprises 379 residues: MKIMRKNHPLLKIINHSFIDLPTPSNISSWWNFGSLLGACLIIQILTGLFLAMHYTSDTTTAFSSVAHICRDVNYGWLIRYLHANGASMFFICLSIHAGRGIYYGSYVLSETWNIGIILFLTTMATAFVGYVLPWGQMSFWGATVITNLLSAIPYIGSTLFEWIWGGFSVDKATLTRFFAFHFILPFIITAFVLVHLLFLHETGSNNPSGLNSNSDKIPFHPYYTIKDLLGVFLLLLALMILALFFPDVLGDPDNFTPANPLNTPAHIKPEWYFLFAYAILRSIPNKLGGVLALILSILILAAFPLLNVSKQHGLIFRPITQTIYWIFIANLLVLTWIGGQPVXYPFTMIGQIASITYFAIILILMPISNTIENNIIKL.

Transmembrane regions (helical) follow at residues 33–53 (FGSL…FLAM), 77–98 (WLIR…SIHA), 113–133 (WNIG…GYVL), and 178–198 (FFAF…VHLL). 2 residues coordinate heme b: His83 and His97. Positions 182 and 196 each coordinate heme b. His201 contributes to the a ubiquinone binding site. Transmembrane regions (helical) follow at residues 226-246 (IKDL…ALFF), 288-308 (LGGV…PLLN), 320-340 (ITQT…WIGG), and 347-367 (FTMI…ILMP).

It belongs to the cytochrome b family. As to quaternary structure, the cytochrome bc1 complex contains 11 subunits: 3 respiratory subunits (MT-CYB, CYC1 and UQCRFS1), 2 core proteins (UQCRC1 and UQCRC2) and 6 low-molecular weight proteins (UQCRH/QCR6, UQCRB/QCR7, UQCRQ/QCR8, UQCR10/QCR9, UQCR11/QCR10 and a cleavage product of UQCRFS1). This cytochrome bc1 complex then forms a dimer. The cofactor is heme b.

It localises to the mitochondrion inner membrane. Its function is as follows. Component of the ubiquinol-cytochrome c reductase complex (complex III or cytochrome b-c1 complex) that is part of the mitochondrial respiratory chain. The b-c1 complex mediates electron transfer from ubiquinol to cytochrome c. Contributes to the generation of a proton gradient across the mitochondrial membrane that is then used for ATP synthesis. This Thaptomys nigrita (Blackish grass mouse) protein is Cytochrome b (MT-CYB).